The primary structure comprises 397 residues: Glycine betaine/carnitine transport ATP-binding protein GbuA (397 aa).

The region spanning 28–264 (KSKTDILKET…PANEYVEKFI (237 aa)) is the ABC transporter domain. Residue 60–67 (GLSGSGKS) coordinates ATP. 2 CBS domains span residues 279 to 335 (MIRP…NITS) and 340 to 395 (LHRD…EVNV).

Belongs to the ABC transporter superfamily. The complex is composed of two ATP-binding proteins (GbuA), two transmembrane proteins (GbuB) and a solute-binding protein (GbuC).

The catalysed reaction is a quaternary ammonium(out) + ATP + H2O = a quaternary ammonium(in) + ADP + phosphate + H(+). The complex is activated by an osmotic gradient or by low temperature. Functionally, part of the ABC transporter complex GbuABC involved in glycine betaine uptake. Responsible for energy coupling to the transport system. Involved, with BetL and OpuC, in osmoprotection and cryoprotection of Listeria. Can also uptake carnitine when carnitine is abundant in the growth medium. The chain is Glycine betaine/carnitine transport ATP-binding protein GbuA (gbuA) from Listeria monocytogenes serotype 1/2a (strain 10403S).